Reading from the N-terminus, the 154-residue chain is MGVQTHVLELTSSVSAEKIFQGFVIDVDTVLPKAAPGAYKSVEIKGDGGPGTLKIITLPDGGPITTMTLRIDGVNKEALTFDYSVIDGDILLGFIESIENHVVLVPTADGGSICKTTAIFHTKGDAVVPEENIKYANEQNTALFKALEAYLIAN.

This sequence belongs to the BetVI family.

The sequence is that of Major allergen Api g 1, isoallergen 1 from Apium graveolens (Celery).